The primary structure comprises 87 residues: Transcriptional regulator PINT87aa (87 aa).

As to quaternary structure, interacts with PAF1 complex member PAF1. Interacts with transcription factor FOXM1. Expressed in brain, liver, kidney and stomach with lower levels in breast, intestine, thyroid and pancreas.

The protein localises to the nucleus. Its function is as follows. Enhances the binding of the PAF1 complex to target gene promoters and plays a role in negative regulation of transcription. May function as an anchor to keep the PAF1 complex on target gene promoters, sequentially pausing RNA polymerase II-induced mRNA elongation. Inhibits FOXM1-mediated transcription of PHB2. The sequence is that of Transcriptional regulator PINT87aa from Homo sapiens (Human).